Consider the following 949-residue polypeptide: Glycine dehydrogenase (decarboxylating) (949 aa).

Lys-702 is subject to N6-(pyridoxal phosphate)lysine.

Belongs to the GcvP family. As to quaternary structure, the glycine cleavage system is composed of four proteins: P, T, L and H. The cofactor is pyridoxal 5'-phosphate.

The catalysed reaction is N(6)-[(R)-lipoyl]-L-lysyl-[glycine-cleavage complex H protein] + glycine + H(+) = N(6)-[(R)-S(8)-aminomethyldihydrolipoyl]-L-lysyl-[glycine-cleavage complex H protein] + CO2. Its function is as follows. The glycine cleavage system catalyzes the degradation of glycine. The P protein binds the alpha-amino group of glycine through its pyridoxal phosphate cofactor; CO(2) is released and the remaining methylamine moiety is then transferred to the lipoamide cofactor of the H protein. The sequence is that of Glycine dehydrogenase (decarboxylating) from Rhodococcoides fascians (Rhodococcus fascians).